Consider the following 822-residue polypeptide: MQGTPPTMKIIENILKNHFSQPLSQNISALTNNYITEVQNFFPLSKNTNLVVGQILNFQKIQGSQKLNLVEVNTGTKVVKIVCGASNLQNGKKVIVASEGSFLEGINATLKNKKIYGVFSEGMLCALEELGISTKFLTPQEQEGIYLFDDPNDQIALGSNALIPLGLDCFILELGLTPNRVGDLLSHLGFAKDLKAVLSSQSSNNNQETKSTNYKTKNSEDQTNPDFFANLPQSPLKVQIENDSCYEYNACILENIKIKPSPLWLRNALLQSGINPINNVVDITNLILIEYGIPLHAFDSENIKQIKVRKALPQENITTLNQNDFVLDENDLVITDGKKAIALAGIVGLLESSIKPTTTKIILEAAYFSPQTIAQTCQKLKTKTESSLRFERGIDQSLIPLAFQKACQLLVTLADGKITYQPVITKQKNRTNPTISLNLDFVTRKIGVSLCPTQIKNWLLNLDYQIHTSKHLGPQNKNEQLNLQAPLRRYDVKIKEDVISDLTRLYGCHKLPPQTIQIPTQGKLTLKQKNIRELRKLLVNLGFYETITYSLISSEMFEAFTPQKPFIKIMNPLSQDKMILRQSLLSSLVEVLSYQHKRQTFDTAFFEIGKTYFPNQETLSLAFALNGHFLNSLWHKQDVSSSFFVTKGILEKISAFLGITLTYQKTQQHSNFHPGMQANLLFNNQIIGVIGKTHPQLNTKYHLKESFLCELFLTDEILNTTKTFTFQPIPKFPTVIRDLAFLVDTKYSFYQIEQTIKQTTPFDLIKCELFDVYQIPKTKEKHSLALRLFFHNLDKNLEKQDVEHCMEKITSNLIKHFHIEIR.

Positions 44-162 (LSKNTNLVVG…DQIALGSNAL (119 aa)) constitute a tRNA-binding domain. Residues 201–224 (QSSNNNQETKSTNYKTKNSEDQTN) form a disordered region. The 84-residue stretch at 430–513 (RTNPTISLNL…RLYGCHKLPP (84 aa)) folds into the B5 domain. Mg(2+) contacts are provided by D491, D497, and D501. The 93-residue stretch at 730–822 (PKFPTVIRDL…LIKHFHIEIR (93 aa)) folds into the FDX-ACB domain.

This sequence belongs to the phenylalanyl-tRNA synthetase beta subunit family. Type 1 subfamily. As to quaternary structure, tetramer of two alpha and two beta subunits. The cofactor is Mg(2+).

The protein localises to the cytoplasm. The enzyme catalyses tRNA(Phe) + L-phenylalanine + ATP = L-phenylalanyl-tRNA(Phe) + AMP + diphosphate + H(+). This Onion yellows phytoplasma (strain OY-M) protein is Phenylalanine--tRNA ligase beta subunit.